The sequence spans 322 residues: MAIKKRNKIRLPSGSPEEVGIDGSAHKPMQQIKPLVSNDSEDDDNDICVLQPIKFKKVPKRDITFDGEQAIKEDNSHYEDLYHSKKNTNASTRNKDDLLILNMEDLMEGNHHLLSDSSEAGSSSEGEHISSIPTRGEIAKLKAQKSLSRRKISESDVTTERDYVKLLDSEDKREIMETIRLNGGLKRNNEKEITNFSDDEMQGFQDEMLALTDNQIAIQKDSKRKIIEKAINEVPYRTNEEWETQLLSKGNINKSNEKIITPLPVLFPDDDESGNSIERINEMVSKICLQRKKVEMRLQALEKTKIDLEKSKASLINKLIGN.

A disordered region spans residues 1 to 30 (MAIKKRNKIRLPSGSPEEVGIDGSAHKPMQ). A Phosphoserine modification is found at Ser40. The interval 113-137 (LLSDSSEAGSSSEGEHISSIPTRGE) is disordered. A compositionally biased stretch (low complexity) spans 115 to 132 (SDSSEAGSSSEGEHISSI). Phosphoserine is present on residues Ser153 and Ser197.

In terms of assembly, component of the NTR complex (NTC-related complex), composed of NTR1, NTR2 and PRP43. Interacts with CLF1, NTR1 and PRP43.

It is found in the cytoplasm. It localises to the nucleus. Its function is as follows. Involved in pre-mRNA splicing and spliceosome disassembly. Promotes release of excised lariat intron from the spliceosome by acting as a receptor for PRP43. This targeting of PRP43 leads to disassembly of the spliceosome with the separation of the U2, U5, U6 snRNPs and the NTC complex. This chain is Pre-mRNA-splicing factor NTR2 (NTR2), found in Saccharomyces cerevisiae (strain ATCC 204508 / S288c) (Baker's yeast).